A 276-amino-acid polypeptide reads, in one-letter code: Streptothricin hydrolase (276 aa).

The active-site Nucleophile is C176. Residues 250–276 (PEAPAAAAAPAAGTGLSPAGPPPAPAR) form a disordered region. The span at 252–267 (APAAAAAPAAGTGLSP) shows a compositional bias: low complexity.

Belongs to the isochorismatase family. Homodimer. The cofactor is Does not require a metal cofactor..

The enzyme catalyses streptothricin F + H2O = streptothricin F acid. In terms of biological role, catalyzes the hydrolysis of the amide bond of streptolidine lactam, thereby conferring streptothricin (ST) resistance. Can hydrolyze streptothricin-F and streptothricin-D. However, this strain is believed to be a ST nonproducer, which raises the possibility that its true role may not be its involvement in self-resistance to STs. May catalyze the hydrolysis of naturally occurring cyclic amide compounds that are structurally related to STs. This chain is Streptothricin hydrolase (sttH), found in Streptomyces noursei (Streptomyces albulus).